A 1351-amino-acid polypeptide reads, in one-letter code: ABC transporter C family member 6 (1351 aa).

In terms of domain architecture, ABC transmembrane type-1 1 spans 112–397; sequence NKYALVSNLF…LPYDIFKAIG (286 aa). 3 helical membrane passes run 120 to 140, 149 to 169, and 248 to 268; these read LFII…INYI, SILK…GQSI, and LLCY…VIAL. The ABC transporter 1 domain occupies 474 to 700; sequence NQDESINKKE…GIDFKSILKT (227 aa). ATP is bound at residue 510–517; the sequence is GVVGSGKT. Residues 701-734 adopt a coiled-coil conformation; it reads KEIKKNVENETDSEELIKNEIEIENEIIDVNNAI. The next 6 helical transmembrane spans lie at 771 to 791, 815 to 835, 904 to 924, 977 to 999, 1002 to 1022, and 1025 to 1045; these read GSSG…QAIF, IGYY…RILL, LISI…LSIA, MFDN…RWVS, LEVM…LFIS, and GLAA…SWGI. One can recognise an ABC transmembrane type-1 2 domain in the interval 777-1060; it reads LFITISLFFV…LEVKMNSFQR (284 aa). Residues 1101-1336 form the ABC transporter 2 domain; that stretch reads IEFKNVEIKY…PNSKFNKLIK (236 aa). 1135–1142 provides a ligand contact to ATP; that stretch reads GRTGAGKT.

The protein belongs to the ABC transporter superfamily. ABCC family. Conjugate transporter (TC 3.A.1.208) subfamily.

Its subcellular location is the membrane. This is ABC transporter C family member 6 (abcC6) from Dictyostelium discoideum (Social amoeba).